The sequence spans 337 residues: GTPase Obg (337 aa).

One can recognise an Obg domain in the interval 1 to 158 (MFVDRVIIEL…HHIELELKLI (158 aa)). The 172-residue stretch at 159 to 330 (ADVGLVGFPN…LIEKMTQRLS (172 aa)) folds into the OBG-type G domain. GTP is bound by residues 165–172 (GFPNAGKS), 190–194 (FTTLQ), 212–215 (DIPG), 282–285 (NKID), and 311–313 (SAV). 2 residues coordinate Mg(2+): S172 and T192.

This sequence belongs to the TRAFAC class OBG-HflX-like GTPase superfamily. OBG GTPase family. In terms of assembly, monomer. Mg(2+) serves as cofactor.

It localises to the cytoplasm. Its function is as follows. An essential GTPase which binds GTP, GDP and possibly (p)ppGpp with moderate affinity, with high nucleotide exchange rates and a fairly low GTP hydrolysis rate. Plays a role in control of the cell cycle, stress response, ribosome biogenesis and in those bacteria that undergo differentiation, in morphogenesis control. This chain is GTPase Obg, found in Protochlamydia amoebophila (strain UWE25).